Here is a 462-residue protein sequence, read N- to C-terminus: Bifunctional protein HldE (462 aa).

The interval 1 to 309 is ribokinase; it reads MKPRILVLGD…EYERSIRKAP (309 aa). 186–189 is a binding site for ATP; that stretch reads NKKE. Asp254 is an active-site residue. The tract at residues 336 to 462 is cytidylyltransferase; that stretch reads FTNGCFDILH…TAIVERMRSC (127 aa).

This sequence in the N-terminal section; belongs to the carbohydrate kinase PfkB family. The protein in the C-terminal section; belongs to the cytidylyltransferase family. Homodimer.

The enzyme catalyses D-glycero-beta-D-manno-heptose 7-phosphate + ATP = D-glycero-beta-D-manno-heptose 1,7-bisphosphate + ADP + H(+). It carries out the reaction D-glycero-beta-D-manno-heptose 1-phosphate + ATP + H(+) = ADP-D-glycero-beta-D-manno-heptose + diphosphate. The protein operates within nucleotide-sugar biosynthesis; ADP-L-glycero-beta-D-manno-heptose biosynthesis; ADP-L-glycero-beta-D-manno-heptose from D-glycero-beta-D-manno-heptose 7-phosphate: step 1/4. It participates in nucleotide-sugar biosynthesis; ADP-L-glycero-beta-D-manno-heptose biosynthesis; ADP-L-glycero-beta-D-manno-heptose from D-glycero-beta-D-manno-heptose 7-phosphate: step 3/4. Its function is as follows. Catalyzes the phosphorylation of D-glycero-D-manno-heptose 7-phosphate at the C-1 position to selectively form D-glycero-beta-D-manno-heptose-1,7-bisphosphate. In terms of biological role, catalyzes the ADP transfer from ATP to D-glycero-beta-D-manno-heptose 1-phosphate, yielding ADP-D-glycero-beta-D-manno-heptose. This is Bifunctional protein HldE from Nitratiruptor sp. (strain SB155-2).